A 493-amino-acid chain; its full sequence is MKFLAVLLAAGMLAFLGAVICIIASVPLAASPARALPGGTDNASAASAAGGSGPQRSLSALHSAGGSAGPSVLPGEPAASVFPPPPVPLLSRFLCTPLAAACPSGAEQGDAAGERAELLLLQSTAEQLRQTALQQEARIRADRDTIRELTGKLGRCESGLPRGLQDAGPRRDTMADGAWDSPALLLELEDAVRALRDRIERIEQELPARGNLSSAPAPAMPTALHSKMDELECQLLAKVLALEKERAALSHGSHQQRQEVEKELNALQGRVAELEHGSSAYSPPDAFKVSIPIRNNYMYARVRKALPELYAFTACMCVRSRSGGSGQGTPFSYSVPGQANEIVLLEAGLEPMELLINDKVAQLPLSLKDSNWHHICISWTTRDGLWSAYQDGELRGSGENLAAWHPIKPHGILILGQEQDTLGGRFDATQAFVGDIAQFNLWDHALTPAQVLGMANCTGPLMGNVLPWEDKLVEAFGGAKKAAFDVCKGRAKA.

At 1 to 2 (MK) the chain is on the cytoplasmic side. The helical; Signal-anchor for type II membrane protein transmembrane segment at 3–23 (FLAVLLAAGMLAFLGAVICII) threads the bilayer. The Extracellular portion of the chain corresponds to 24-493 (ASVPLAASPA…FDVCKGRAKA (470 aa)). The tract at residues 37–72 (PGGTDNASAASAAGGSGPQRSLSALHSAGGSAGPSV) is disordered. Residue Asn42 is glycosylated (N-linked (GlcNAc...) asparagine). The span at 57–72 (SLSALHSAGGSAGPSV) shows a compositional bias: low complexity. N-linked (GlcNAc...) asparagine glycosylation is present at Asn211. The region spanning 285-487 (DAFKVSIPIR…GAKKAAFDVC (203 aa)) is the Pentraxin (PTX) domain. An intrachain disulfide couples Cys315 to Cys376. Positions 340, 418, 419, 420, and 430 each coordinate Ca(2+). Residue Asn456 is glycosylated (N-linked (GlcNAc...) asparagine).

Heteropentamer with NPTX1 and/or NPTX2. Also binds taipoxin-associated calcium-binding protein 49 (TCBP49/RCN2). Interacts with KLHL2. The cofactor is Ca(2+). Ubiquitinated by a cullin-RING-based BCR (BTB-CUL3-RBX1) E3 ubiquitin-protein ligase complex containing KLHL2.

It localises to the membrane. May be involved in mediating uptake of synaptic material during synapse remodeling or in mediating the synaptic clustering of AMPA glutamate receptors at a subset of excitatory synapses. The polypeptide is Neuronal pentraxin receptor (Nptxr) (Mus musculus (Mouse)).